The chain runs to 59 residues: Transcription elongation factor Spt4 (59 aa).

Positions 4, 7, 16, and 19 each coordinate Zn(2+).

Belongs to the archaeal Spt4 family. As to quaternary structure, heterodimer composed of Spt4 and Spt5.

In terms of biological role, stimulates transcription elongation. This Methanocaldococcus jannaschii (strain ATCC 43067 / DSM 2661 / JAL-1 / JCM 10045 / NBRC 100440) (Methanococcus jannaschii) protein is Transcription elongation factor Spt4.